Here is a 464-residue protein sequence, read N- to C-terminus: Protein FAM90A1 (464 aa).

Disordered regions lie at residues 1–43, 71–294, 312–386, 412–437, and 445–464; these read MMAR…PRLK, PNFG…KRSA, PFQI…AASH, PSFH…SEGP, and VLYE…SDLE. Composition is skewed to basic and acidic residues over residues 74–83 and 97–114; these read GEKEGKENLK and NKDK…DPQR. Over residues 180-197 the composition is skewed to low complexity; the sequence is LASLSPLRKASLSSSSSL. The segment covering 344–355 has biased composition (polar residues); the sequence is TSPQTGTRTPAQ.

The protein belongs to the FAM90 family.

The polypeptide is Protein FAM90A1 (FAM90A1) (Homo sapiens (Human)).